Consider the following 92-residue polypeptide: Antifungal protein B (92 aa).

A signal peptide spans 1-18; sequence MHITSIAIVFFAAMGAVA. A propeptide spanning residues 19-34 is cleaved from the precursor; it reads SPIATESDDLDARDVQ. 3 disulfide bridges follow: cysteine 42-cysteine 70, cysteine 49-cysteine 77, and cysteine 62-cysteine 88.

The protein belongs to the antifungal protein pafB family.

The protein localises to the secreted. Its subcellular location is the host cytoplasm. Antifungal protein that acts as an inhibitor of growth of human pathogenic molds and yeasts. This is Antifungal protein B from Penicillium rubens (strain ATCC 28089 / DSM 1075 / NRRL 1951 / Wisconsin 54-1255) (Penicillium chrysogenum).